The chain runs to 376 residues: Erythronate-4-phosphate dehydrogenase (376 aa).

Positions 45 and 66 each coordinate substrate. Residues D146 and T175 each coordinate NAD(+). Residue R209 is part of the active site. Residue D233 coordinates NAD(+). E238 is a catalytic residue. Residue H255 is the Proton donor of the active site. G258 is an NAD(+) binding site. Y259 is a substrate binding site.

It belongs to the D-isomer specific 2-hydroxyacid dehydrogenase family. PdxB subfamily. Homodimer.

The protein resides in the cytoplasm. It catalyses the reaction 4-phospho-D-erythronate + NAD(+) = (R)-3-hydroxy-2-oxo-4-phosphooxybutanoate + NADH + H(+). It participates in cofactor biosynthesis; pyridoxine 5'-phosphate biosynthesis; pyridoxine 5'-phosphate from D-erythrose 4-phosphate: step 2/5. Its function is as follows. Catalyzes the oxidation of erythronate-4-phosphate to 3-hydroxy-2-oxo-4-phosphonooxybutanoate. The polypeptide is Erythronate-4-phosphate dehydrogenase (Baumannia cicadellinicola subsp. Homalodisca coagulata).